The chain runs to 77 residues: Tautomerase PptA (77 aa).

P2 (proton acceptor; via imino nitrogen) is an active-site residue.

Belongs to the 4-oxalocrotonate tautomerase family. PptA subfamily. As to quaternary structure, homodimer.

The protein resides in the cytoplasm. In Escherichia coli (strain K12 / MC4100 / BW2952), this protein is Tautomerase PptA.